The following is a 507-amino-acid chain: Ribonuclease Y (507 aa).

A helical transmembrane segment spans residues 1-21; that stretch reads MLWYIVAGAGGLLIGYLIANY. Residues 197-282 enclose the KH domain; sequence TVSTVSLPSD…EMYEKAKQEV (86 aa). One can recognise an HD domain in the interval 323–416; that stretch reads VLNHSIEVAL…VAAADALSAA (94 aa).

Belongs to the RNase Y family.

The protein resides in the cell membrane. Its function is as follows. Endoribonuclease that initiates mRNA decay. The chain is Ribonuclease Y from Thermotoga sp. (strain RQ2).